Here is a 504-residue protein sequence, read N- to C-terminus: MFS antiporter QDR2 (504 aa).

Polar residues predominate over residues 1 to 14 (MLSTTQSVTEPTEV). The tract at residues 1–23 (MLSTTQSVTEPTEVTSKKVEDIE) is disordered. At 1 to 41 (MLSTTQSVTEPTEVTSKKVEDIEKENDEETPYSIFTSYDRL) the chain is on the cytoplasmic side. Residues 42–62 (VLIVILSLIGFWSTISSPIYF) form a helical membrane-spanning segment. The Extracellular portion of the chain corresponds to 63–75 (PALPTLTSYFHTS). A helical membrane pass occupies residues 76-96 (SSIMNISVVAYLIFQGIAPTI). Residues 97–106 (SSNLADTFGR) are Cytoplasmic-facing. The chain crosses the membrane as a helical span at residues 107 to 129 (RPVILASIIVFCASCVAISQTNV). Topologically, residues 130-132 (YWL) are extracellular. Residues 133–155 (LAVLRCIQAAGIAAVISISSGVA) form a helical membrane-spanning segment. The Cytoplasmic portion of the chain corresponds to 156-169 (GDVCTRANRGSMVG). A helical membrane pass occupies residues 170–190 (AVAGLQLVGNGIGGLVGAALI). The Extracellular portion of the chain corresponds to 191-198 (SSFNSWRS). The helical transmembrane segment at 199–219 (IFIFLTIGGGVTFILAIFILP) threads the bilayer. At 220–278 (ETSRKLVGNGSVVPKNILNKSPYIYLPHFKKRMNNDITTIVPATRFDLLGPLKIFFQKN) the chain is on the cytoplasmic side. The chain crosses the membrane as a helical span at residues 279–299 (VFCTLLPVGIHFAAWTMVLTS). The Extracellular portion of the chain corresponds to 300-311 (LSTELESRYHYS). The chain crosses the membrane as a helical span at residues 312 to 332 (VMHVGLIYLPQGIACIAGSLV). Over 333–370 (VGKSLDWYYRYRKTIYDQEVECLPLDERPQFNIVATRL) the chain is Cytoplasmic. Residues 371-391 (TLSVVPALLMIIGLVIFGWCI) form a helical membrane-spanning segment. The Extracellular segment spans residues 392–396 (QYKRH). A helical membrane pass occupies residues 397–417 (IISIIISTILVSFSASVFIAI). At 418–438 (CTTMLVDLYPNNGSGSTSCLN) the chain is on the cytoplasmic side. Residues 439–456 (LMRCWLAALGAGVLDSMI) form a helical membrane-spanning segment. Residues 457–460 (NAMN) lie on the Extracellular side of the membrane. The chain crosses the membrane as a helical span at residues 461 to 483 (VGGTYTVVAGFCILFDLALIYVL). The Cytoplasmic segment spans residues 484–504 (HNAKKKFSNSGPTTTKSPPKQ).

This sequence belongs to the major facilitator superfamily. CAR1 family.

Its subcellular location is the cell membrane. Functionally, MFS antiporter that does not display functional linkage as drug transporter and performs functions that significantly affect biofilm development and virulence. No substrate for transport has been identified yet, but plays an important role in the growth in the host. The sequence is that of MFS antiporter QDR2 (QDR2) from Candida albicans (strain SC5314 / ATCC MYA-2876) (Yeast).